A 420-amino-acid chain; its full sequence is Pyridinium-3,5-bisthiocarboxylic acid mononucleotide nickel insertion protein (420 aa).

The segment at N81 to H104 is disordered. Positions E90 to S99 are enriched in basic and acidic residues.

Belongs to the LarC family.

The enzyme catalyses Ni(II)-pyridinium-3,5-bisthiocarboxylate mononucleotide = pyridinium-3,5-bisthiocarboxylate mononucleotide + Ni(2+). Involved in the biosynthesis of a nickel-pincer cofactor ((SCS)Ni(II) pincer complex). Binds Ni(2+), and functions in nickel delivery to pyridinium-3,5-bisthiocarboxylic acid mononucleotide (P2TMN), to form the mature cofactor. Is thus probably required for the activation of nickel-pincer cofactor-dependent enzymes. The polypeptide is Pyridinium-3,5-bisthiocarboxylic acid mononucleotide nickel insertion protein (Clostridium acetobutylicum (strain ATCC 824 / DSM 792 / JCM 1419 / IAM 19013 / LMG 5710 / NBRC 13948 / NRRL B-527 / VKM B-1787 / 2291 / W)).